Here is a 238-residue protein sequence, read N- to C-terminus: 1-(5-phosphoribosyl)-5-[(5-phosphoribosylamino)methylideneamino] imidazole-4-carboxamide isomerase (238 aa).

Asp8 functions as the Proton acceptor in the catalytic mechanism. The active-site Proton donor is the Asp130.

The protein belongs to the HisA/HisF family.

It is found in the cytoplasm. It catalyses the reaction 1-(5-phospho-beta-D-ribosyl)-5-[(5-phospho-beta-D-ribosylamino)methylideneamino]imidazole-4-carboxamide = 5-[(5-phospho-1-deoxy-D-ribulos-1-ylimino)methylamino]-1-(5-phospho-beta-D-ribosyl)imidazole-4-carboxamide. It functions in the pathway amino-acid biosynthesis; L-histidine biosynthesis; L-histidine from 5-phospho-alpha-D-ribose 1-diphosphate: step 4/9. The sequence is that of 1-(5-phosphoribosyl)-5-[(5-phosphoribosylamino)methylideneamino] imidazole-4-carboxamide isomerase from Methanococcus maripaludis (strain C7 / ATCC BAA-1331).